Reading from the N-terminus, the 1179-residue chain is MGLQFILGDATTDHAGTMATMVQANLQADSQNQIFYLVPNHIKFEAEVDLLKRLRAQAASVNGVYAQNRVQVLSFSRLAWYFLKNTALYQQPRLDRASNTMLVAKILGESKEELTIYAGEAHNTGFVTQLADQLSELVTGRITAEDLNTTVAALTPGDRHRAKLRDLGIILDHYEAEIGPYATNASLLSGLQQVMRNQDLSHTFIYLNDFNVFSASETGLVETMIETAAEVTVSLVLDKPYPAAPPVAPNLFLPAGRLYHRLYQKAKTMKVPIRLDRFAKPRPLSEGMKHLADWWQTSTNLQPQAPAQTAQNKEVELAVATDPYHELRTVARQIYQAVRQGARYRDFLILARRLDPYAAVIPAIFEEFNIPQFTDLERPMKDHPLVVLIESLFAIQDHDYQYQDVMRLLHTELLLPENMDIAAFRDALDTTDNHLVRTGITGKKRWTQTDPWRYFQRNPNADDSQLDPEADKTAQINAIKTLVADTVPQLLRQWQTAKTGREAAASLYQWLQTTGVIDQLNVWRQTANADGDLSRSQANEQAWDTFTQLLNDYATILGEADFNRDQFRELLAAGFASATYTQIPSTLDSVVISETGLVRLAKAKHVYVIGATNTAMPDVPNDSGVLNSEERQLLAAQLPDDRFLPEQGPTTTLGDPFINYLGFMAASEKLTLSYPMQNTQENSENQASPYFRQLAQALQLTPATWAPAGLGTSLKAVLGSQRAMLSDFVRAAGEAQHQKLPLSRSWQGVLASLKQTTLAPLAQKLAGSLTYQNDPGRLDPTLAVQLYGRDMNVSVSRLETYYRNQFEYFLKYGLLLQPRPEFELSPADTGSLFHAVLDQYLTQLRDAGQTLADVTAADVAAAVPPLVAAITKRPGYEILGSTHRMAYLTSRLSRLLIQVLTNMRQQQRRTGFRPMRTELQFGRIGDTRGLPGLSWPLPHGGRVNVRGKIDRLDVYRESDAQRFMVVDYKSTQHRFDDSDAYYGIALQMLTYVEAMANVPADPPFVPAGALYFHLQDPKFKFSTDLDLDIDRLKAFKYLGFLVAKDGADLAAVDKTISAETGGRSMMVPLGFKKDGAFNYNQSNILTPEDLSAYLLHNQALIIDAASRILAGDIALAPFQYGQESTVISNSDYQSIMLFDPATGFDHYNHVPKLKRKEVLGRVTTDPTQIPHHRQEDSQA.

The protein belongs to the helicase family. AddB/RexB type 2 subfamily. In terms of assembly, heterodimer of AddA and RexB. It depends on Mg(2+) as a cofactor.

The heterodimer acts as both an ATP-dependent DNA helicase and an ATP-dependent, dual-direction single-stranded exonuclease. Recognizes the chi site generating a DNA molecule suitable for the initiation of homologous recombination. This subunit has 5' -&gt; 3' nuclease activity but not helicase activity. The chain is ATP-dependent helicase/deoxyribonuclease subunit B from Lacticaseibacillus paracasei (strain ATCC 334 / BCRC 17002 / CCUG 31169 / CIP 107868 / KCTC 3260 / NRRL B-441) (Lactobacillus paracasei).